The following is a 235-amino-acid chain: Secretory carrier-associated membrane protein 5A (235 aa).

The Cytoplasmic segment spans residues 1 to 39 (MSDKPNNFPPLPRFIPLKPCFYQDFDTDIPDLHRTTAKR). A helical transmembrane segment spans residues 40 to 60 (LYYLWMLNSITLGVNLIGCLA). The Extracellular segment spans residues 61–67 (WLIGGGS). A helical membrane pass occupies residues 68-88 (ATNFGLAFLWLILFTPCSYVC). Residues 89 to 102 (WFRPIYKAFKTDSS) are Cytoplasmic-facing. A helical transmembrane segment spans residues 103–125 (FNFMAFFFTFTAQLVISIIQAVG). The Extracellular segment spans residues 126–148 (IPGWGVCGWIASISFFGTNVGSA). A helical transmembrane segment spans residues 149 to 169 (VVMLIPTIMFTAVAVLSFVAL). At 170–235 (TKVHRFYRGA…TPNYGYSNEM (66 aa)) the chain is on the cytoplasmic side.

This sequence belongs to the SCAMP family. SCAMP5 subfamily.

It localises to the cell membrane. Its subcellular location is the golgi apparatus membrane. The protein resides in the golgi apparatus. The protein localises to the trans-Golgi network membrane. It is found in the recycling endosome membrane. It localises to the cytoplasmic vesicle. Its subcellular location is the secretory vesicle. The protein resides in the synaptic vesicle membrane. Functionally, required for the calcium-dependent exocytosis of signal sequence-containing cytokines. Probably acts in cooperation with the SNARE machinery. This Xenopus laevis (African clawed frog) protein is Secretory carrier-associated membrane protein 5A (scamp5-a).